The sequence spans 640 residues: Threonine--tRNA ligase (640 aa).

Residues M1–T61 form the TGS domain. The segment at D242–P533 is catalytic. Zn(2+) contacts are provided by C333, H384, and H510.

This sequence belongs to the class-II aminoacyl-tRNA synthetase family. As to quaternary structure, homodimer. The cofactor is Zn(2+).

It localises to the cytoplasm. The enzyme catalyses tRNA(Thr) + L-threonine + ATP = L-threonyl-tRNA(Thr) + AMP + diphosphate + H(+). Functionally, catalyzes the attachment of threonine to tRNA(Thr) in a two-step reaction: L-threonine is first activated by ATP to form Thr-AMP and then transferred to the acceptor end of tRNA(Thr). Also edits incorrectly charged L-seryl-tRNA(Thr). This Prochlorococcus marinus (strain MIT 9313) protein is Threonine--tRNA ligase.